The chain runs to 846 residues: Pseudolaratriene synthase, chloroplastic (846 aa).

A chloroplast-targeting transit peptide spans 1–58 (MSRFTSATHGLNLSIKMPISVSQVPSIRSNTSKYELQKLRSTGRSVLQTRRQLAIINM). Residues Asp595, Asp599, and Asp747 each coordinate Mg(2+). Positions 595-599 (DDIYD) match the DDXXD motif motif.

It belongs to the terpene synthase family. Mg(2+) is required as a cofactor. In terms of tissue distribution, expressed in young and mature roots. Expressed at low levels in barks.

Its subcellular location is the plastid. The protein localises to the chloroplast. It catalyses the reaction (2E,6E,10E)-geranylgeranyl diphosphate = pseudolaratriene + diphosphate. Its pathway is terpene metabolism. Converts geranylgeranyl diphosphate to an new 5,7-fused bicyclic diterpene, named pseudolaratriene. Catalyzes the first committed step in pseudolaric acid B (PAB) biosynthesis. PAB exhibits antiproliferative activity by inhibiting microtubule polymerization, and has demonstrated antitumor properties against several cancer types. This is Pseudolaratriene synthase, chloroplastic from Pseudolarix amabilis (Golden larch).